A 209-amino-acid chain; its full sequence is V-type ATP synthase subunit D (209 aa).

Belongs to the V-ATPase D subunit family.

Produces ATP from ADP in the presence of a proton gradient across the membrane. The sequence is that of V-type ATP synthase subunit D from Thermoanaerobacter pseudethanolicus (strain ATCC 33223 / 39E) (Clostridium thermohydrosulfuricum).